The following is a 450-amino-acid chain: 23S rRNA (uracil(1939)-C(5))-methyltransferase RlmD (450 aa).

The TRAM domain maps to 12–70 (SKQLSAKLSLNVDQLDHLGAGIAQYQGKVVFIPGALPDETVTVQLTEQKKNYARAKLIK). Cys-83, Cys-89, Cys-92, and Cys-171 together coordinate [4Fe-4S] cluster. Gln-283, Phe-312, Asn-317, Glu-333, Asp-360, and Asp-380 together coordinate S-adenosyl-L-methionine. Catalysis depends on Cys-406, which acts as the Nucleophile.

Belongs to the class I-like SAM-binding methyltransferase superfamily. RNA M5U methyltransferase family. RlmD subfamily.

The enzyme catalyses uridine(1939) in 23S rRNA + S-adenosyl-L-methionine = 5-methyluridine(1939) in 23S rRNA + S-adenosyl-L-homocysteine + H(+). In terms of biological role, catalyzes the formation of 5-methyl-uridine at position 1939 (m5U1939) in 23S rRNA. This Shewanella putrefaciens (strain CN-32 / ATCC BAA-453) protein is 23S rRNA (uracil(1939)-C(5))-methyltransferase RlmD.